The chain runs to 458 residues: Succinate-semialdehyde dehydrogenase [NADP(+)] 1 (458 aa).

NADP(+)-binding positions include 134–135 (WN), 158–161 (KHAS), and 210–211 (GS). Glu-232 functions as the Proton acceptor in the catalytic mechanism. Leu-233 serves as a coordination point for NADP(+). The active-site Nucleophile is Cys-266. Glu-363 is an NADP(+) binding site.

It belongs to the aldehyde dehydrogenase family.

It carries out the reaction succinate semialdehyde + NADP(+) + H2O = succinate + NADPH + 2 H(+). In terms of biological role, catalyzes the NADP(+)-dependent oxidation of succinate semialdehyde to succinate. It is believed to be the main source of succinate semialdehyde dehydrogenase activity in Mycobacterium. The sequence is that of Succinate-semialdehyde dehydrogenase [NADP(+)] 1 (gabD1) from Mycobacterium ulcerans (strain Agy99).